Here is a 156-residue protein sequence, read N- to C-terminus: Small ribosomal subunit protein uS7 (156 aa).

This sequence belongs to the universal ribosomal protein uS7 family. In terms of assembly, part of the 30S ribosomal subunit. Contacts proteins S9 and S11.

Its function is as follows. One of the primary rRNA binding proteins, it binds directly to 16S rRNA where it nucleates assembly of the head domain of the 30S subunit. Is located at the subunit interface close to the decoding center, probably blocks exit of the E-site tRNA. In Nitrosospira multiformis (strain ATCC 25196 / NCIMB 11849 / C 71), this protein is Small ribosomal subunit protein uS7.